Reading from the N-terminus, the 114-residue chain is Iron-sulfur cluster insertion protein ErpA (114 aa).

Iron-sulfur cluster-binding residues include cysteine 42, cysteine 106, and cysteine 108.

It belongs to the HesB/IscA family. Homodimer. Iron-sulfur cluster serves as cofactor.

In terms of biological role, required for insertion of 4Fe-4S clusters for at least IspG. This is Iron-sulfur cluster insertion protein ErpA from Buchnera aphidicola subsp. Acyrthosiphon pisum (strain 5A).